The chain runs to 143 residues: Large ribosomal subunit protein uL11 (143 aa).

This sequence belongs to the universal ribosomal protein uL11 family. In terms of assembly, part of the ribosomal stalk of the 50S ribosomal subunit. Interacts with L10 and the large rRNA to form the base of the stalk. L10 forms an elongated spine to which L12 dimers bind in a sequential fashion forming a multimeric L10(L12)X complex. In terms of processing, one or more lysine residues are methylated.

Forms part of the ribosomal stalk which helps the ribosome interact with GTP-bound translation factors. The chain is Large ribosomal subunit protein uL11 from Paraburkholderia phytofirmans (strain DSM 17436 / LMG 22146 / PsJN) (Burkholderia phytofirmans).